We begin with the raw amino-acid sequence, 183 residues long: Bifunctional protein PyrR (183 aa).

Positions 102–114 match the PRPP-binding motif; it reads VVLVDDVLYTGRT.

Belongs to the purine/pyrimidine phosphoribosyltransferase family. PyrR subfamily. As to quaternary structure, homodimer and homohexamer; in equilibrium.

The catalysed reaction is UMP + diphosphate = 5-phospho-alpha-D-ribose 1-diphosphate + uracil. In terms of biological role, regulates transcriptional attenuation of the pyrimidine nucleotide (pyr) operon by binding in a uridine-dependent manner to specific sites on pyr mRNA. This disrupts an antiterminator hairpin in the RNA and favors formation of a downstream transcription terminator, leading to a reduced expression of downstream genes. Also displays a weak uracil phosphoribosyltransferase activity which is not physiologically significant. In Listeria monocytogenes serotype 4a (strain HCC23), this protein is Bifunctional protein PyrR.